We begin with the raw amino-acid sequence, 436 residues long: C4-dicarboxylate transport protein 2 (436 aa).

Transmembrane regions (helical) follow at residues 14-34 (VLVAIAIGIALGHWYPETAVA), 45-65 (LIKMAIAPIIFCTVVTGIAGM), 77-97 (MALLYFEVVSTVALIIGLVVV), 142-162 (VVGAFANGDILQVLFFSVLFG), 198-218 (PIGAFGAMAFTIGAYGVGSLV), 223-243 (LMLCFYITCILFVLIVLGGIA), 290-310 (VVGLVIPTGYSFNLDGTSIYL), 331-351 (ITLLLVLLIASKGAAGVTGSG), and 353-373 (IVLAATLSAVGHLPVAGLALI). Residues 414–436 (ELAGEGNASSPASDIPVGGREAV) are disordered.

It belongs to the dicarboxylate/amino acid:cation symporter (DAACS) (TC 2.A.23) family.

It is found in the cell inner membrane. Functionally, responsible for the transport of dicarboxylates such as succinate, fumarate, and malate from the periplasm across the membrane. The sequence is that of C4-dicarboxylate transport protein 2 from Pseudomonas aeruginosa (strain UCBPP-PA14).